We begin with the raw amino-acid sequence, 575 residues long: Transcription factor COE2 (575 aa).

Residues 62–65 (RKSN) are interaction with DNA. Residues 150-169 (CRVLLTHEVMCSRCCEKKSC) form a C5-type zinc finger. Interaction with DNA regions lie at residues 196 to 203 (NCLKTAGN) and 235 to 238 (NNSK). The IPT/TIG domain maps to 253-336 (PCIKAISPSE…KGAPGRFIYT (84 aa)). The segment covering 441–453 (STQGNNQGYIRNT) has biased composition (polar residues). Residues 441 to 479 (STQGNNQGYIRNTSSISPRGYSSSSTPQQSNYSTSSNSM) are disordered. Positions 454–479 (SSISPRGYSSSSTPQQSNYSTSSNSM) are enriched in low complexity.

The protein belongs to the COE family. In terms of assembly, forms either a homodimer or a heterodimer with a related family member. Interacts with SIX1.

The protein resides in the nucleus. Transcription factor that, in osteoblasts, activates the decoy receptor for RANKL, TNFRSF11B, which in turn regulates osteoclast differentiation. Acts in synergy with the Wnt-responsive LEF1/CTNNB1 pathway. Recognizes variations of the palindromic sequence 5'-ATTCCCNNGGGAATT-3'. The polypeptide is Transcription factor COE2 (EBF2) (Bos taurus (Bovine)).